Consider the following 244-residue polypeptide: Phosphoadenosine 5'-phosphosulfate reductase (244 aa).

Cys-239 functions as the Nucleophile; cysteine thiosulfonate intermediate in the catalytic mechanism.

It belongs to the PAPS reductase family. CysH subfamily.

It is found in the cytoplasm. It carries out the reaction [thioredoxin]-disulfide + sulfite + adenosine 3',5'-bisphosphate + 2 H(+) = [thioredoxin]-dithiol + 3'-phosphoadenylyl sulfate. Its pathway is sulfur metabolism; hydrogen sulfide biosynthesis; sulfite from sulfate: step 3/3. Catalyzes the formation of sulfite from phosphoadenosine 5'-phosphosulfate (PAPS) using thioredoxin as an electron donor. This Buchnera aphidicola subsp. Acyrthosiphon pisum (strain Tuc7) protein is Phosphoadenosine 5'-phosphosulfate reductase.